Here is a 233-residue protein sequence, read N- to C-terminus: Probable transglycosylase IsaA (233 aa).

The first 29 residues, 1–29, serve as a signal peptide directing secretion; it reads MKKTIMASSLAVALGVTGYAASTGHEAHA.

Belongs to the transglycosylase family. IsaA subfamily.

The protein localises to the secreted. Its function is as follows. Is able to cleave peptidoglycan. The protein is Probable transglycosylase IsaA (isaA) of Staphylococcus aureus (strain bovine RF122 / ET3-1).